Here is a 119-residue protein sequence, read N- to C-terminus: uncharacterized protein (119 aa).

The next 3 membrane-spanning stretches (helical) occupy residues 28-48 (AWTTGIWLIALCYEIVSHLVF), 55-75 (IEVVHGWVYFVYVLTAFNLAI), and 80-100 (PIGKTVGVLLAGTVPLLGIIV).

The protein to M.tuberculosis Rv1342c.

The protein localises to the cell membrane. This is an uncharacterized protein from Mycobacterium leprae (strain TN).